We begin with the raw amino-acid sequence, 809 residues long: Cyclic nucleotide-gated channel beta-3 (809 aa).

2 disordered regions span residues 1 to 121 (MFKS…PPAA) and 153 to 178 (GDLSSPEASPQTAKPTAVPPVKESDD). Over 1 to 218 (MFKSLTKVNK…SIDSYTDRLY (218 aa)) the chain is Cytoplasmic. Basic and acidic residues predominate over residues 22-31 (QSSRRNEEGS). Residues 32–43 (HPSNQSQQTTAQ) show a composition bias toward polar residues. Residues 44–53 (EENKGEEKSL) are compositionally biased toward basic and acidic residues. Over residues 55-88 (TKSTPVTSEEPHTNIQDKLSKKNSSGDLTTNPDP) the composition is skewed to polar residues. A helical transmembrane segment spans residues 219–242 (LLWLLLVTLAYNWNCCFIPLRLVF). Residues 243-249 (PYQTADN) are Extracellular-facing. Residues 250–270 (IHYWLIADIICDIIYLYDMLF) traverse the membrane as a helical segment. The Cytoplasmic segment spans residues 271–299 (IQPRLQFVRGGDIIVDSNELRKHYRTSTK). The helical transmembrane segment at 300–317 (FQLDVASIIPFDICYLFF) threads the bilayer. Residues 318 to 320 (GFN) lie on the Extracellular side of the membrane. A helical membrane pass occupies residues 321-335 (PMFRANRMLKYTSFF). The Cytoplasmic segment spans residues 336 to 348 (EFNHHLESIMDKA). Positions 348–447 (AYIYRVIRTT…IGQMRDVIGA (100 aa)) are ion conduction pathway. A helical transmembrane segment spans residues 349-371 (YIYRVIRTTGYLLFILHINACVY). Residues 372–393 (YWASNYEGIGTTRWVYDGEGNE) lie on the Extracellular side of the membrane. A run of 2 helical transmembrane segments spans residues 394 to 420 (YLRCYYWAVRTLITIGGLPEPQTLFEI) and 421 to 445 (VFQLLNFFSGVFVFSSLIGQMRDVI). The selectivity filter stretch occupies residues 407–410 (TIGG). At 446-809 (GAATANQNYF…TIEVKEKAKQ (364 aa)) the chain is on the cytoplasmic side. A C-linker region spans residues 450–526 (ANQNYFRACM…SIISKVDLFK (77 aa)). The tract at residues 530 to 646 (TQMIYDMLLR…ILMKKARVLL (117 aa)) is cyclic nucleotide-binding domain. 4 residues coordinate 3',5'-cyclic GMP: glycine 591, glutamate 592, arginine 604, and threonine 605. The tract at residues 698–776 (QAAQKKENSE…PHSVRRTVLP (79 aa)) is disordered. The segment covering 716 to 755 (NEDKQKENEDKQKENEDKGKENEDKDKGREPEEKPLDRPE) has biased composition (basic and acidic residues).

It belongs to the cyclic nucleotide-gated cation channel (TC 1.A.1.5) family. CNGB3 subfamily. As to quaternary structure, forms heterotetrameric channels composed of CNGA3 and CNGB3 subunits with 3:1 stoichiometry. Expressed specifically in the retina.

The protein localises to the cell membrane. It catalyses the reaction Ca(2+)(in) = Ca(2+)(out). The catalysed reaction is Na(+)(in) = Na(+)(out). It carries out the reaction K(+)(in) = K(+)(out). The enzyme catalyses NH4(+)(in) = NH4(+)(out). It catalyses the reaction Rb(+)(in) = Rb(+)(out). The catalysed reaction is Li(+)(in) = Li(+)(out). It carries out the reaction Cs(+)(in) = Cs(+)(out). Functionally, pore-forming subunit of the cone cyclic nucleotide-gated channel. Mediates cone photoresponses at bright light converting transient changes in intracellular cGMP levels into electrical signals. In the dark, cGMP levels are high and keep the channel open enabling a steady inward current carried by Na(+) and Ca(2+) ions that leads to membrane depolarization and neurotransmitter release from synaptic terminals. Upon photon absorption cGMP levels decline leading to channel closure and membrane hyperpolarization that ultimately slows neurotransmitter release and signals the presence of light, the end point of the phototransduction cascade. Conducts cGMP- and cAMP-gated ion currents, with permeability for monovalent and divalent cations. The chain is Cyclic nucleotide-gated channel beta-3 from Homo sapiens (Human).